Here is a 581-residue protein sequence, read N- to C-terminus: Intermediate filament protein ifa-2 (581 aa).

2 disordered regions span residues 1–35 (MTDP…GSGN) and 47–68 (SSVS…RDNR). The tract at residues 1-74 (MTDPDSYRSS…RDNREREKKE (74 aa)) is head. Positions 7–28 (YRSSITSRPSFNRTVTSSSQNY) are enriched in polar residues. One can recognise an IF rod domain in the interval 71-424 (EKKEIMELND…QMLEGNSEGN (354 aa)). The segment at 75–106 (IMELNDRLASYIEKVRFLDAQNRKLDADLKML) is coil 1A. Positions 107–120 (QGRFGKSTGSVKVM) are linker 1. The segment at 121 to 258 (YEMEITTATN…RGFETELKEL (138 aa)) is coil 1B. A linker 12 region spans residues 259–276 (QAQAARDTTSENREYFKN). Residues 277-424 (ELANAMRDIR…QMLEGNSEGN (148 aa)) form a coil 2 region. A tail region spans residues 425-578 (GLRQLVEKVV…THIQRQSQQT (154 aa)). Positions 449–469 (RVVKGEHSSRTSYQRSAKGNV) are disordered. The 118-residue stretch at 457-574 (SRTSYQRSAK…EERATHIQRQ (118 aa)) folds into the LTD domain.

This sequence belongs to the intermediate filament family. As to quaternary structure, forms some heteromeric filaments with ifb-1. Mainly expressed in regions of the hypodermis adjacent to muscle. Expressed in longitudinal stripes where the mechanosensory neurons interface with the hypodermis. Also expressed to the uterine seam and within the uterine-vulval cells.

Its subcellular location is the cell junction. It localises to the hemidesmosome. Cytoplasmic intermediate filaments provide mechanical strength to cells. Essential protein, involved in attachment structures in epidermal cells that connect muscles to the external cuticle. Probably acts by forming hypodermal hemidesmosome complexes that help mediate muscle-cuticle force transduction. Although expressed during embryogenesis, it is not required for embryonic development of muscle-cuticle linkages nor for the localization of other proteins to the hemidesmosomes in embryos. This Caenorhabditis elegans protein is Intermediate filament protein ifa-2.